The sequence spans 259 residues: MGHHGQMHAQHGVTMPADSPIGQPDRSEQRYFPATAFRTRRSTLSDAQRQTWDRRWPELGLSVGPAEDPDRPGPPLDTDAWFGRKAPVVLEIGCGNGTSTLAMAKEEPGVDVIAVEVYRRGLAQLLCAIDRDNVTNIRLIRGNALDVLQRLIAPASLTGVRVFFPDPWPKARHHKRRFLQPGTVGLIADRLLPGGVLHVATDHAGYAEHIADVGAGEPRLRPANPDSPLPISVARPTTKYETKAQDAGSAVTEFIWLRR.

Positions Met-1 to Gly-73 are disordered. S-adenosyl-L-methionine contacts are provided by Glu-91, Glu-116, Asn-143, and Asp-166. The active site involves Asp-166. Substrate contacts are provided by residues Lys-170, Asp-202, and Thr-238–Glu-241.

Belongs to the class I-like SAM-binding methyltransferase superfamily. TrmB family.

It catalyses the reaction guanosine(46) in tRNA + S-adenosyl-L-methionine = N(7)-methylguanosine(46) in tRNA + S-adenosyl-L-homocysteine. Its pathway is tRNA modification; N(7)-methylguanine-tRNA biosynthesis. Functionally, catalyzes the formation of N(7)-methylguanine at position 46 (m7G46) in tRNA. The protein is tRNA (guanine-N(7)-)-methyltransferase of Mycolicibacterium paratuberculosis (strain ATCC BAA-968 / K-10) (Mycobacterium paratuberculosis).